We begin with the raw amino-acid sequence, 569 residues long: 2-isopropylmalate synthase (569 aa).

Residues 31-305 (PRWMSTDLRD…APELDFSDID (275 aa)) form the Pyruvate carboxyltransferase domain. D40, H244, H246, and N280 together coordinate Mg(2+). Positions 437-569 (RETPLRYVSH…TASASAATEA (133 aa)) are regulatory domain.

This sequence belongs to the alpha-IPM synthase/homocitrate synthase family. LeuA type 2 subfamily. As to quaternary structure, homodimer. Requires Mg(2+) as cofactor.

It is found in the cytoplasm. It carries out the reaction 3-methyl-2-oxobutanoate + acetyl-CoA + H2O = (2S)-2-isopropylmalate + CoA + H(+). It functions in the pathway amino-acid biosynthesis; L-leucine biosynthesis; L-leucine from 3-methyl-2-oxobutanoate: step 1/4. Functionally, catalyzes the condensation of the acetyl group of acetyl-CoA with 3-methyl-2-oxobutanoate (2-ketoisovalerate) to form 3-carboxy-3-hydroxy-4-methylpentanoate (2-isopropylmalate). The protein is 2-isopropylmalate synthase of Cupriavidus taiwanensis (strain DSM 17343 / BCRC 17206 / CCUG 44338 / CIP 107171 / LMG 19424 / R1) (Ralstonia taiwanensis (strain LMG 19424)).